A 191-amino-acid chain; its full sequence is Imidazoleglycerol-phosphate dehydratase (191 aa).

Belongs to the imidazoleglycerol-phosphate dehydratase family.

It is found in the cytoplasm. The catalysed reaction is D-erythro-1-(imidazol-4-yl)glycerol 3-phosphate = 3-(imidazol-4-yl)-2-oxopropyl phosphate + H2O. It participates in amino-acid biosynthesis; L-histidine biosynthesis; L-histidine from 5-phospho-alpha-D-ribose 1-diphosphate: step 6/9. This is Imidazoleglycerol-phosphate dehydratase from Thermodesulfovibrio yellowstonii (strain ATCC 51303 / DSM 11347 / YP87).